We begin with the raw amino-acid sequence, 130 residues long: Small ribosomal subunit protein uS11c (130 aa).

The protein belongs to the universal ribosomal protein uS11 family. As to quaternary structure, part of the 30S ribosomal subunit.

Its subcellular location is the plastid. It localises to the chloroplast. In Angiopteris evecta (Mule's foot fern), this protein is Small ribosomal subunit protein uS11c.